Here is a 723-residue protein sequence, read N- to C-terminus: UPF0313 protein YgiQ (723 aa).

Residues 372 to 650 enclose the Radical SAM core domain; that stretch reads AYEMIRFSIN…KALLRYHDPA (279 aa). [4Fe-4S] cluster contacts are provided by Cys-386, Cys-390, and Cys-393. The segment at 686 to 723 is disordered; that stretch reads EARRQNRNTRPALTKHTPVEHQRQGLAANKKRGKGAGR. The segment covering 714–723 has biased composition (basic residues); it reads NKKRGKGAGR.

This sequence belongs to the UPF0313 family. [4Fe-4S] cluster serves as cofactor.

The polypeptide is UPF0313 protein YgiQ (Salmonella typhimurium (strain LT2 / SGSC1412 / ATCC 700720)).